A 587-amino-acid polypeptide reads, in one-letter code: Glutamine--tRNA ligase (587 aa).

Residues Pro58 to His68 carry the 'HIGH' region motif. ATP contacts are provided by residues Glu59–Asn61 and His65–Ser71. L-glutamine-binding residues include Asp91 and Tyr240. Residues Thr259 and Arg294–Leu295 contribute to the ATP site. Residues Val301–Arg305 carry the 'KMSKS' region motif.

This sequence belongs to the class-I aminoacyl-tRNA synthetase family. Monomer.

Its subcellular location is the cytoplasm. It carries out the reaction tRNA(Gln) + L-glutamine + ATP = L-glutaminyl-tRNA(Gln) + AMP + diphosphate. This Bordetella parapertussis (strain 12822 / ATCC BAA-587 / NCTC 13253) protein is Glutamine--tRNA ligase.